The following is a 215-amino-acid chain: Glycerol-3-phosphate acyltransferase (215 aa).

The next 6 helical transmembrane spans lie at 3–23, 42–61, 68–90, 110–130, 134–154, and 162–182; these read LILL…LWIG, TNTF…LIDI, TLLP…FAVL, AGVL…VFVL, LFSM…ISVL, and LLPS…AIII.

Belongs to the PlsY family. In terms of assembly, probably interacts with PlsX.

The protein resides in the cell membrane. It catalyses the reaction an acyl phosphate + sn-glycerol 3-phosphate = a 1-acyl-sn-glycero-3-phosphate + phosphate. It functions in the pathway lipid metabolism; phospholipid metabolism. In terms of biological role, catalyzes the transfer of an acyl group from acyl-phosphate (acyl-PO(4)) to glycerol-3-phosphate (G3P) to form lysophosphatidic acid (LPA). This enzyme utilizes acyl-phosphate as fatty acyl donor, but not acyl-CoA or acyl-ACP. The protein is Glycerol-3-phosphate acyltransferase of Streptococcus equi subsp. equi (strain 4047).